Consider the following 597-residue polypeptide: MNNIRNFSIIAHIDHGKSTLADRIIQLCGGLSDREMEAQVLDSMDIERERGITIKAQTAALMYKARDGQVYNLNLIDTPGHVDFSYEVSRSLSACEGALLVVDASQGVEAQTVANCYTALDLGVEVVPVLNKIDLPSADPANAIAEIEEVIGIDASEAVHCSAKTGLGVQDVLESLITKVPPPKGDATAPLQALIVDSWFDNYVGVVMLVRVMNGTLRPKDKILLMASESQHLVESVGVFTPKSISRDTLTAGQVGFIIAGIKELKAAKVGDTVTLASRPAAEPLPGFKEVQPQVFAGLFPVEANQYDALRDSLEKLKLNDAALMYEPEVSQALGFGFRCGFLGLLHMEIVQERLEREFDMDLITTAPTVIYEVVLRDGSILMVDNPSKMPDPSKIEEIREPIVTVNLYMPQEYVGSVITLCTQKRGIQMDMSYHGKQVKLIYEMPMAEIVLDFFDKLKSTSRGYASMDYEFKEYRSSDVVKVDMLINSEKVDALAIIVHRANSQYRGRAVAAKMRELIPRQMFDVAIQAAIGANIISRENVKALRKNVLAKCYGGDISRKRKLLEKQKAGKKRMKQVGSVEIPQEAFLAILQVDDK.

One can recognise a tr-type G domain in the interval 2–184 (NNIRNFSIIA…SLITKVPPPK (183 aa)). GTP is bound by residues 14-19 (DHGKST) and 131-134 (NKID).

This sequence belongs to the TRAFAC class translation factor GTPase superfamily. Classic translation factor GTPase family. LepA subfamily.

It is found in the cell inner membrane. The catalysed reaction is GTP + H2O = GDP + phosphate + H(+). Functionally, required for accurate and efficient protein synthesis under certain stress conditions. May act as a fidelity factor of the translation reaction, by catalyzing a one-codon backward translocation of tRNAs on improperly translocated ribosomes. Back-translocation proceeds from a post-translocation (POST) complex to a pre-translocation (PRE) complex, thus giving elongation factor G a second chance to translocate the tRNAs correctly. Binds to ribosomes in a GTP-dependent manner. This Janthinobacterium sp. (strain Marseille) (Minibacterium massiliensis) protein is Elongation factor 4.